A 500-amino-acid polypeptide reads, in one-letter code: ATP synthase subunit alpha (500 aa).

168 to 175 (GDRQTGKT) contacts ATP.

Belongs to the ATPase alpha/beta chains family. As to quaternary structure, F-type ATPases have 2 components, CF(1) - the catalytic core - and CF(0) - the membrane proton channel. CF(1) has five subunits: alpha(3), beta(3), gamma(1), delta(1), epsilon(1). CF(0) has three main subunits: a(1), b(2) and c(9-12). The alpha and beta chains form an alternating ring which encloses part of the gamma chain. CF(1) is attached to CF(0) by a central stalk formed by the gamma and epsilon chains, while a peripheral stalk is formed by the delta and b chains.

It is found in the cell membrane. The enzyme catalyses ATP + H2O + 4 H(+)(in) = ADP + phosphate + 5 H(+)(out). Functionally, produces ATP from ADP in the presence of a proton gradient across the membrane. The alpha chain is a regulatory subunit. The protein is ATP synthase subunit alpha of Streptococcus suis (strain 98HAH33).